A 425-amino-acid chain; its full sequence is Gamma-glutamyl phosphate reductase (425 aa).

It belongs to the gamma-glutamyl phosphate reductase family.

It localises to the cytoplasm. It carries out the reaction L-glutamate 5-semialdehyde + phosphate + NADP(+) = L-glutamyl 5-phosphate + NADPH + H(+). It functions in the pathway amino-acid biosynthesis; L-proline biosynthesis; L-glutamate 5-semialdehyde from L-glutamate: step 2/2. Catalyzes the NADPH-dependent reduction of L-glutamate 5-phosphate into L-glutamate 5-semialdehyde and phosphate. The product spontaneously undergoes cyclization to form 1-pyrroline-5-carboxylate. This Symbiobacterium thermophilum (strain DSM 24528 / JCM 14929 / IAM 14863 / T) protein is Gamma-glutamyl phosphate reductase.